Reading from the N-terminus, the 79-residue chain is Acyl carrier protein (79 aa).

Residues 2-77 (SDIEARVKKI…LAIDYAKSHA (76 aa)) enclose the Carrier domain. At Ser37 the chain carries O-(pantetheine 4'-phosphoryl)serine.

Belongs to the acyl carrier protein (ACP) family. In terms of processing, 4'-phosphopantetheine is transferred from CoA to a specific serine of apo-ACP by AcpS. This modification is essential for activity because fatty acids are bound in thioester linkage to the sulfhydryl of the prosthetic group.

The protein resides in the cytoplasm. Its pathway is lipid metabolism; fatty acid biosynthesis. Carrier of the growing fatty acid chain in fatty acid biosynthesis. The sequence is that of Acyl carrier protein from Methylibium petroleiphilum (strain ATCC BAA-1232 / LMG 22953 / PM1).